The following is a 318-amino-acid chain: MSITKNAPREGAEEVAATALGVAAARAAETRRQRPLIVDPFAQLFVDAAGQDLWSMVASGAAHDELASADPALAAVMQTSLGHIASRTKFFDEFVLAAADAGIRQVVSLGAGLDTRAWRLSWPDAVTVYELEQPNVLEFKLATLRDNGATPAANYVDVPVDLHRCWPRSLCLAGFDPAAPTAWLVEGLLPFLSVAAQDLLFGDVHKLSVPGSWLAAEALSSEFLKPTTVARQRARIRRMRVTAATLAGLSNVTELWDLAEGRSDVADWLRGRGWHASVLTAERLLARYHRSAPVELGDATPPSLYVTARLSAESSLDA.

Residues E132 and 161-162 (DL) contribute to the S-adenosyl-L-methionine site.

It belongs to the UPF0677 family.

Functionally, exhibits S-adenosyl-L-methionine-dependent methyltransferase activity. The protein is Putative S-adenosyl-L-methionine-dependent methyltransferase MMAR_1595 of Mycobacterium marinum (strain ATCC BAA-535 / M).